We begin with the raw amino-acid sequence, 384 residues long: 23S rRNA (uracil(747)-C(5))-methyltransferase RlmC (384 aa).

[4Fe-4S] cluster-binding residues include Cys-7, Cys-15, Cys-18, and Cys-94. Residues Gln-219, Phe-248, Glu-269, and Asn-316 each contribute to the S-adenosyl-L-methionine site. The active-site Nucleophile is Cys-343.

It belongs to the class I-like SAM-binding methyltransferase superfamily. RNA M5U methyltransferase family. RlmC subfamily.

The catalysed reaction is uridine(747) in 23S rRNA + S-adenosyl-L-methionine = 5-methyluridine(747) in 23S rRNA + S-adenosyl-L-homocysteine + H(+). Functionally, catalyzes the formation of 5-methyl-uridine at position 747 (m5U747) in 23S rRNA. The chain is 23S rRNA (uracil(747)-C(5))-methyltransferase RlmC from Shewanella sp. (strain MR-7).